The sequence spans 217 residues: Probable transaldolase (217 aa).

The active-site Schiff-base intermediate with substrate is K83.

The protein belongs to the transaldolase family. Type 3B subfamily.

It localises to the cytoplasm. The enzyme catalyses D-sedoheptulose 7-phosphate + D-glyceraldehyde 3-phosphate = D-erythrose 4-phosphate + beta-D-fructose 6-phosphate. It participates in carbohydrate degradation; pentose phosphate pathway; D-glyceraldehyde 3-phosphate and beta-D-fructose 6-phosphate from D-ribose 5-phosphate and D-xylulose 5-phosphate (non-oxidative stage): step 2/3. Its function is as follows. Transaldolase is important for the balance of metabolites in the pentose-phosphate pathway. This chain is Probable transaldolase, found in Caldicellulosiruptor saccharolyticus (strain ATCC 43494 / DSM 8903 / Tp8T 6331).